Consider the following 405-residue polypeptide: Na(+)-translocating NADH-quinone reductase subunit F (405 aa).

Residues 3–23 (IILGIVMFTVIVLALALMILF) traverse the membrane as a helical segment. Residues 32–124 (GDITIKVNDE…DMDIEVPEEV (93 aa)) form the 2Fe-2S ferredoxin-type domain. [2Fe-2S] cluster-binding residues include Cys-67, Cys-73, Cys-76, and Cys-108. The 141-residue stretch at 127 to 267 (VKKWECTVIS…SGPFGEFFAK (141 aa)) folds into the FAD-binding FR-type domain.

This sequence belongs to the NqrF family. In terms of assembly, composed of six subunits; NqrA, NqrB, NqrC, NqrD, NqrE and NqrF. Requires [2Fe-2S] cluster as cofactor. The cofactor is FAD.

Its subcellular location is the cell inner membrane. It carries out the reaction a ubiquinone + n Na(+)(in) + NADH + H(+) = a ubiquinol + n Na(+)(out) + NAD(+). NQR complex catalyzes the reduction of ubiquinone-1 to ubiquinol by two successive reactions, coupled with the transport of Na(+) ions from the cytoplasm to the periplasm. The first step is catalyzed by NqrF, which accepts electrons from NADH and reduces ubiquinone-1 to ubisemiquinone by a one-electron transfer pathway. In Neisseria gonorrhoeae (strain ATCC 700825 / FA 1090), this protein is Na(+)-translocating NADH-quinone reductase subunit F.